Reading from the N-terminus, the 469-residue chain is COP9 signalosome complex subunit 5 (469 aa).

The region spanning 63–200 (TYISSLALCK…IGAFRTFPDN (138 aa)) is the MPN domain. His-146, His-148, and Asp-159 together coordinate Zn(2+). A JAMM motif motif is present at residues 146-159 (HSHPGYGCWLSGID). 2 disordered regions span residues 201–220 (YKSPDSAAPTNNTRGVPPSK) and 331–404 (YDSF…KRPM). Residues 344 to 353 (DEMDDESDLD) are compositionally biased toward acidic residues.

The protein belongs to the peptidase M67A family. CSN5 subfamily. As to quaternary structure, component of the COP9 signalosome (CSN) complex.

It is found in the cytoplasm. The protein localises to the nucleus. In terms of biological role, catalytic Component of the COP9 signalosome (CSN) complex that acts as an regulator of the ubiquitin (Ubl) conjugation pathway by mediating the deneddylation of the cullin subunit of SCF-type E3 ubiquitin-protein ligase complexes. The CSN complex is involved in the regulation of the mating pheromone response. The sequence is that of COP9 signalosome complex subunit 5 (RRI1) from Debaryomyces hansenii (strain ATCC 36239 / CBS 767 / BCRC 21394 / JCM 1990 / NBRC 0083 / IGC 2968) (Yeast).